We begin with the raw amino-acid sequence, 242 residues long: Small ribosomal subunit protein uS2 (242 aa).

The protein belongs to the universal ribosomal protein uS2 family.

The chain is Small ribosomal subunit protein uS2 from Pseudoalteromonas translucida (strain TAC 125).